We begin with the raw amino-acid sequence, 397 residues long: Lysophospholipid transporter LplT (397 aa).

Topologically, residues 1-17 (MSESVHTNTSLWSKGMK) are periplasmic. A helical membrane pass occupies residues 18 to 38 (AVIVAQFLSAFGDNALLFATL). The Cytoplasmic portion of the chain corresponds to 39–52 (ALLKAQFYPEWSQP). The chain crosses the membrane as a helical span at residues 53 to 73 (ILQMVFVGAYILFAPFVGQVA). Residues 74–90 (DSFAKGRVMMFANGLKL) lie on the Periplasmic side of the membrane. The helical transmembrane segment at 91 to 111 (LGAASICFGINPFLGYTLVGV) threads the bilayer. Residues 112–144 (GAAAYSPAKYGILGELTTGSKLVKANGLMEAST) lie on the Cytoplasmic side of the membrane. A helical membrane pass occupies residues 145-165 (IAAILLGSVAGGVLADWHILV). A166 is a topological domain (periplasmic). The chain crosses the membrane as a helical span at residues 167–187 (LVACALAYGGAVVANIYIPKL). The Cytoplasmic portion of the chain corresponds to 188-226 (AAARPGQSWNLISMTRSFLNACTSLWRNGETRFSLVGTS). A helical transmembrane segment spans residues 227–247 (LFWGAGVTLRFLLVLWVPVAL). The Periplasmic segment spans residues 248-256 (GITDNATPT). A helical membrane pass occupies residues 257 to 277 (YLNAMVAIGIVVGAGAAAKLV). Over 278 to 280 (TLE) the chain is Cytoplasmic. A helical transmembrane segment spans residues 281 to 301 (TVSRCMPAGILIGVVVLIFSL). Residues 302–304 (QHE) lie on the Periplasmic side of the membrane. The helical transmembrane segment at 305–325 (LLPAYALLMLIGVLGGFFVVP) threads the bilayer. The Cytoplasmic segment spans residues 326 to 343 (LNALLQERGKKSVGAGNA). A helical membrane pass occupies residues 344–364 (IAVQNLGENSAMLLMLGIYSL). The Periplasmic portion of the chain corresponds to 365 to 366 (AV). Residues 367–387 (MVGIPVVPIGIGFGALFALAI) traverse the membrane as a helical segment. The Cytoplasmic segment spans residues 388–397 (TALWIWQRRH).

Belongs to the major facilitator superfamily. LplT (TC 2.A.1.42) family.

The protein localises to the cell inner membrane. In terms of biological role, catalyzes the facilitated diffusion of 2-acyl-glycero-3-phosphoethanolamine (2-acyl-GPE) into the cell. This is Lysophospholipid transporter LplT from Escherichia coli O81 (strain ED1a).